Reading from the N-terminus, the 663-residue chain is DNA topoisomerase 4 subunit B (663 aa).

Residues Tyr7, Asn47, Asp74, 114-120 (GLHGVGA), and Lys341 each bind ATP. The tract at residues 386–416 (REAARKAREDARSGKKNKRKDTLLSGKLTPA) is disordered. Positions 387–398 (EAARKAREDARS) are enriched in basic and acidic residues. In terms of domain architecture, Toprim spans 424-538 (NELYLVEGDS…ADRVFIALPP (115 aa)). Mg(2+) is bound by residues Glu430, Asp503, and Asp505.

The protein belongs to the type II topoisomerase family. ParE type 2 subfamily. Heterotetramer composed of ParC and ParE. Requires Mg(2+) as cofactor. Mn(2+) is required as a cofactor. It depends on Ca(2+) as a cofactor.

It carries out the reaction ATP-dependent breakage, passage and rejoining of double-stranded DNA.. In terms of biological role, topoisomerase IV is essential for chromosome segregation. It relaxes supercoiled DNA. Performs the decatenation events required during the replication of a circular DNA molecule. This is DNA topoisomerase 4 subunit B from Staphylococcus aureus (strain MSSA476).